The following is a 1523-amino-acid chain: Dicer-like protein 1 (1523 aa).

The segment covering 24–38 (LNLSGERTISTTEPT) has biased composition (polar residues). The interval 24–58 (LNLSGERTISTTEPTEGNDSSSEESGDNEQISTQR) is disordered. Residues 123-304 (LFERAKSQNT…ESATKLEVLL (182 aa)) form the Helicase ATP-binding domain. 136–143 (LDTGSGKT) serves as a coordination point for ATP. The short motif at 249–252 (DEAH) is the DEAH box element. The 174-residue stretch at 444–617 (LLRQKLIKYF…GIDSEIDSIL (174 aa)) folds into the Helicase C-terminal domain. A Dicer dsRNA-binding fold domain is found at 640-730 (ALAILARYAS…NSVYHRRLPA (91 aa)). The PAZ domain occupies 879–1007 (ELLHLVHENE…VCIEPLRISA (129 aa)). RNase III domains lie at 1031–1190 (IALE…LSGG) and 1241–1392 (GRKV…VDSD). Positions 1281, 1378, and 1381 each coordinate Mg(2+). The DRBM domain occupies 1426–1494 (TFLQNRLTNE…SEKALSVLEN (69 aa)). 4 residues coordinate Zn(2+): Cys-1438, His-1465, Cys-1506, and Cys-1508.

Belongs to the helicase family. Dicer subfamily. Requires Mg(2+) as cofactor. It depends on Mn(2+) as a cofactor.

In terms of biological role, dicer-like endonuclease involved in cleaving double-stranded RNA in the RNA interference (RNAi) pathway. Produces 21 to 25 bp dsRNAs (siRNAs) which target the selective destruction of homologous RNAs leading to sequence-specific suppression of gene expression, called post-transcriptional gene silencing (PTGS). Part of a broad host defense response against viral infection and transposons. The chain is Dicer-like protein 1 (dcl1) from Aspergillus oryzae (strain ATCC 42149 / RIB 40) (Yellow koji mold).